A 173-amino-acid polypeptide reads, in one-letter code: Crossover junction endodeoxyribonuclease RuvC (173 aa).

Residues Asp-10, Glu-71, and Asp-143 contribute to the active site. The Mg(2+) site is built by Asp-10, Glu-71, and Asp-143.

The protein belongs to the RuvC family. As to quaternary structure, homodimer which binds Holliday junction (HJ) DNA. The HJ becomes 2-fold symmetrical on binding to RuvC with unstacked arms; it has a different conformation from HJ DNA in complex with RuvA. In the full resolvosome a probable DNA-RuvA(4)-RuvB(12)-RuvC(2) complex forms which resolves the HJ. The cofactor is Mg(2+).

It is found in the cytoplasm. The catalysed reaction is Endonucleolytic cleavage at a junction such as a reciprocal single-stranded crossover between two homologous DNA duplexes (Holliday junction).. In terms of biological role, the RuvA-RuvB-RuvC complex processes Holliday junction (HJ) DNA during genetic recombination and DNA repair. Endonuclease that resolves HJ intermediates. Cleaves cruciform DNA by making single-stranded nicks across the HJ at symmetrical positions within the homologous arms, yielding a 5'-phosphate and a 3'-hydroxyl group; requires a central core of homology in the junction. The consensus cleavage sequence is 5'-(A/T)TT(C/G)-3'. Cleavage occurs on the 3'-side of the TT dinucleotide at the point of strand exchange. HJ branch migration catalyzed by RuvA-RuvB allows RuvC to scan DNA until it finds its consensus sequence, where it cleaves and resolves the cruciform DNA. The chain is Crossover junction endodeoxyribonuclease RuvC from Gloeobacter violaceus (strain ATCC 29082 / PCC 7421).